A 337-amino-acid chain; its full sequence is Phenylalanine--tRNA ligase alpha subunit (337 aa).

A Mg(2+)-binding site is contributed by Glu252.

It belongs to the class-II aminoacyl-tRNA synthetase family. Phe-tRNA synthetase alpha subunit type 1 subfamily. In terms of assembly, tetramer of two alpha and two beta subunits. It depends on Mg(2+) as a cofactor.

The protein localises to the cytoplasm. It catalyses the reaction tRNA(Phe) + L-phenylalanine + ATP = L-phenylalanyl-tRNA(Phe) + AMP + diphosphate + H(+). This chain is Phenylalanine--tRNA ligase alpha subunit, found in Francisella tularensis subsp. novicida (strain U112).